Here is a 180-residue protein sequence, read N- to C-terminus: MTRLKDKYLNEAAPALIEKFKYSSRMQVPKLEKVVLNMGVGEVKDNPKAMDSAVNDMTLITGQKPIVTKAKKSVAAFKLRQGMNIGCKVTLRGDRMYEFVDKLFNVAIPRVRDFRGLSSNSFDGRGNYSMGIKDQLIFPEIEYDKVDKLRGMDIVFVTTAKSDEEAKELLKLLGMPFSQN.

The protein belongs to the universal ribosomal protein uL5 family. As to quaternary structure, part of the 50S ribosomal subunit; part of the 5S rRNA/L5/L18/L25 subcomplex. Contacts the 5S rRNA and the P site tRNA. Forms a bridge to the 30S subunit in the 70S ribosome.

Its function is as follows. This is one of the proteins that bind and probably mediate the attachment of the 5S RNA into the large ribosomal subunit, where it forms part of the central protuberance. In the 70S ribosome it contacts protein S13 of the 30S subunit (bridge B1b), connecting the 2 subunits; this bridge is implicated in subunit movement. Contacts the P site tRNA; the 5S rRNA and some of its associated proteins might help stabilize positioning of ribosome-bound tRNAs. This Ruminiclostridium cellulolyticum (strain ATCC 35319 / DSM 5812 / JCM 6584 / H10) (Clostridium cellulolyticum) protein is Large ribosomal subunit protein uL5.